The chain runs to 530 residues: Ubiquitin carboxyl-terminal hydrolase 17-like protein 10 (530 aa).

The 296-residue stretch at 80–375 (AGLQNMGNTC…QAYVLFYIQK (296 aa)) folds into the USP domain. Cys89 functions as the Nucleophile in the catalytic mechanism. The active-site Proton acceptor is the His334. 2 stretches are compositionally biased toward basic and acidic residues: residues 382-392 (SESVSRGREPR) and 398-410 (DTDR…ELKR). Disordered stretches follow at residues 382–410 (SESV…ELKR) and 477–530 (NHHP…LVCQ). Low complexity predominate over residues 484 to 495 (SSLLNLSSTTPT). Polar residues predominate over residues 496–505 (DQESMNTGTL). Positions 510-524 (GRTRRSKGKNKHSKR) are enriched in basic residues.

It belongs to the peptidase C19 family. USP17 subfamily.

Its subcellular location is the nucleus. The protein localises to the endoplasmic reticulum. The catalysed reaction is Thiol-dependent hydrolysis of ester, thioester, amide, peptide and isopeptide bonds formed by the C-terminal Gly of ubiquitin (a 76-residue protein attached to proteins as an intracellular targeting signal).. Deubiquitinating enzyme that removes conjugated ubiquitin from specific proteins to regulate different cellular processes that may include cell proliferation, progression through the cell cycle, apoptosis, cell migration, and the cellular response to viral infection. In Homo sapiens (Human), this protein is Ubiquitin carboxyl-terminal hydrolase 17-like protein 10 (USP17L10).